Consider the following 390-residue polypeptide: MPPSGLRLLPLLLPLPWLLVLTPGRPAAGLSTCKTIDMELVKRKRIEAIRGQILSKLRLASPPSQGEVPPGPLPEAVLALYNSTRDRVAGESADPEPEPEADYYAKEVTRVLMVDRNNAIYEKTKDISHSIYMFFNTSDIREAVPEPPLLSRAELRLQRLKSSVEQHVELYQKYSNNSWRYLGNRLLTPTDTPEWLSFDVTGVVRQWLNQGDGIQGFRFSAHCSCDSKDNKLHVEINGISPKRRGDLGTIHDMNRPFLLLMATPLERAQHLHSSRHRRALDTNYCFSSTEKNCCVRQLYIDFRKDLGWKWIHEPKGYHANFCLGPCPYIWSLDTQYSKVLALYNQHNPGASASPCCVPQALEPLPIVYYVGRKPKVEQLSNMIVRSCKCS.

An N-terminal signal peptide occupies residues 1–29; sequence MPPSGLRLLPLLLPLPWLLVLTPGRPAAG. Residues 30-74 are straightjacket domain; that stretch reads LSTCKTIDMELVKRKRIEAIRGQILSKLRLASPPSQGEVPPGPLP. The segment at 75–271 is arm domain; that stretch reads EAVLALYNST…ATPLERAQHL (197 aa). N-linked (GlcNAc...) asparagine glycans are attached at residues N82, N136, and N176. Residues 226–252 are bowtie tail; that stretch reads DSKDNKLHVEINGISPKRRGDLGTIHD. The Cell attachment site motif lies at 244 to 246; that stretch reads RGD. 4 cysteine pairs are disulfide-bonded: C285–C294, C293–C356, C322–C387, and C326–C389.

The protein belongs to the TGF-beta family. Homodimer; disulfide-linked. Interacts with the serine proteases, HTRA1 and HTRA3: the interaction with either inhibits TGFB1-mediated signaling and the HTRA protease activity is required for this inhibition. May interact with THSD4; this interaction may lead to sequestration by FBN1 microfibril assembly and attenuation of TGFB signaling. Interacts with CD109, DPT and ASPN. Interacts with EFEMP2. Interacts with TSKU; the interaction contributes to regulation of the hair cycle. Interacts with TGFBR3. As to quaternary structure, homodimer; disulfide-linked. Interacts with transforming growth factor beta-1 (TGF-beta-1) chain; interaction is non-covalent and maintains TGF-beta-1 in a latent state; each latency-associated peptide (LAP) monomer interacts with TGF-beta-1 in the other monomer. Interacts with LTBP1; leading to regulation of TGF-beta-1 activation. Interacts with LRRC32/GARP; leading to regulation of TGF-beta-1 activation on the surface of activated regulatory T-cells (Tregs). Interacts with LRRC33/NRROS; leading to regulation of TGF-beta-1 activation in macrophages and microglia. Interacts (via cell attachment site) with integrins ITGAV and ITGB6 (ITGAV:ITGB6), leading to release of the active TGF-beta-1. Interacts with NREP; the interaction results in a decrease in TGFB1 autoinduction. Interacts with HSP90AB1; inhibits latent TGFB1 activation. In terms of assembly, homodimer; disulfide-linked. Interacts with TGF-beta receptors (TGFBR1 and TGFBR2), leading to signal transduction. Transforming growth factor beta-1 proprotein: The precursor proprotein is cleaved in the Golgi apparatus by FURIN to form Transforming growth factor beta-1 (TGF-beta-1) and Latency-associated peptide (LAP) chains, which remain non-covalently linked, rendering TGF-beta-1 inactive. In terms of processing, N-glycosylated. Deglycosylation leads to activation of Transforming growth factor beta-1 (TGF-beta-1); mechanisms triggering deglycosylation-driven activation of TGF-beta-1 are however unclear. In terms of tissue distribution, expressed in cardiomyocytes. Weakly expressed in the mammary glands, with a slight increase of expression following onset of involution.

It localises to the secreted. Its subcellular location is the extracellular space. The protein resides in the extracellular matrix. Its function is as follows. Transforming growth factor beta-1 proprotein: Precursor of the Latency-associated peptide (LAP) and Transforming growth factor beta-1 (TGF-beta-1) chains, which constitute the regulatory and active subunit of TGF-beta-1, respectively. Functionally, required to maintain the Transforming growth factor beta-1 (TGF-beta-1) chain in a latent state during storage in extracellular matrix. Associates non-covalently with TGF-beta-1 and regulates its activation via interaction with 'milieu molecules', such as LTBP1, LRRC32/GARP and LRRC33/NRROS, that control activation of TGF-beta-1. Interaction with LRRC33/NRROS regulates activation of TGF-beta-1 in macrophages and microglia. Interaction with LRRC32/GARP controls activation of TGF-beta-1 on the surface of activated regulatory T-cells (Tregs). Interaction with integrins (ITGAV:ITGB6 or ITGAV:ITGB8) results in distortion of the Latency-associated peptide chain and subsequent release of the active TGF-beta-1. Multifunctional protein that regulates the growth and differentiation of various cell types and is involved in various processes, such as normal development, immune function, microglia function and responses to neurodegeneration. Activation into mature form follows different steps: following cleavage of the proprotein in the Golgi apparatus, Latency-associated peptide (LAP) and Transforming growth factor beta-1 (TGF-beta-1) chains remain non-covalently linked rendering TGF-beta-1 inactive during storage in extracellular matrix. At the same time, LAP chain interacts with 'milieu molecules', such as LTBP1, LRRC32/GARP and LRRC33/NRROS that control activation of TGF-beta-1 and maintain it in a latent state during storage in extracellular milieus. TGF-beta-1 is released from LAP by integrins (ITGAV:ITGB6 or ITGAV:ITGB8): integrin-binding to LAP stabilizes an alternative conformation of the LAP bowtie tail and results in distortion of the LAP chain and subsequent release of the active TGF-beta-1. Once activated following release of LAP, TGF-beta-1 acts by binding to TGF-beta receptors (TGFBR1 and TGFBR2), which transduce signal. While expressed by many cells types, TGF-beta-1 only has a very localized range of action within cell environment thanks to fine regulation of its activation by Latency-associated peptide chain (LAP) and 'milieu molecules'. Plays an important role in bone remodeling: acts as a potent stimulator of osteoblastic bone formation, causing chemotaxis, proliferation and differentiation in committed osteoblasts. Can promote either T-helper 17 cells (Th17) or regulatory T-cells (Treg) lineage differentiation in a concentration-dependent manner. At high concentrations, leads to FOXP3-mediated suppression of RORC and down-regulation of IL-17 expression, favoring Treg cell development. At low concentrations in concert with IL-6 and IL-21, leads to expression of the IL-17 and IL-23 receptors, favoring differentiation to Th17 cells. Stimulates sustained production of collagen through the activation of CREB3L1 by regulated intramembrane proteolysis (RIP). Mediates SMAD2/3 activation by inducing its phosphorylation and subsequent translocation to the nucleus. Positively regulates odontoblastic differentiation in dental papilla cells, via promotion of IPO7-mediated translocation of phosphorylated SMAD2 to the nucleus and subsequent transcription of target genes. Can induce epithelial-to-mesenchymal transition (EMT) and cell migration in various cell types. The chain is Transforming growth factor beta-1 proprotein from Mus musculus (Mouse).